The primary structure comprises 21 residues: Hemocyanin subunit 4 (21 aa).

Belongs to the tyrosinase family. Hemocyanin subfamily. In terms of tissue distribution, hemolymph.

The protein localises to the secreted. It is found in the extracellular space. Functionally, hemocyanins are copper-containing oxygen carriers occurring freely dissolved in the hemolymph of many mollusks and arthropods. The sequence is that of Hemocyanin subunit 4 from Maja squinado (Mediterranean spider crab).